A 146-amino-acid polypeptide reads, in one-letter code: Large ribosomal subunit protein uL23m (146 aa).

Positions 108–138 (PDLFPEKDPRSPEPLEEELPQQRQSSDLRCP) are disordered. Over residues 111-120 (FPEKDPRSPE) the composition is skewed to basic and acidic residues.

This sequence belongs to the universal ribosomal protein uL23 family. As to quaternary structure, component of the mitochondrial ribosome large subunit (39S) which comprises a 16S rRNA and about 50 distinct proteins.

The protein localises to the mitochondrion. This chain is Large ribosomal subunit protein uL23m (Mrpl23), found in Mus musculus (Mouse).